Reading from the N-terminus, the 462-residue chain is Siroheme synthase (462 aa).

A precorrin-2 dehydrogenase /sirohydrochlorin ferrochelatase region spans residues 1 to 203 (MEYLPLFANL…GKWEHAEKEI (203 aa)). Residues 22–23 (NV) and 43–44 (DD) each bind NAD(+). Position 128 is a phosphoserine (S128). The interval 215–462 (GNVALVGAGP…NWFGKIIKEQ (248 aa)) is uroporphyrinogen-III C-methyltransferase. Residue P224 coordinates S-adenosyl-L-methionine. The active-site Proton acceptor is the D247. Residue K269 is the Proton donor of the active site. S-adenosyl-L-methionine contacts are provided by residues 300–302 (GGD), I305, 330–331 (TA), M383, and G412.

In the N-terminal section; belongs to the precorrin-2 dehydrogenase / sirohydrochlorin ferrochelatase family. It in the C-terminal section; belongs to the precorrin methyltransferase family.

It carries out the reaction uroporphyrinogen III + 2 S-adenosyl-L-methionine = precorrin-2 + 2 S-adenosyl-L-homocysteine + H(+). The enzyme catalyses precorrin-2 + NAD(+) = sirohydrochlorin + NADH + 2 H(+). It catalyses the reaction siroheme + 2 H(+) = sirohydrochlorin + Fe(2+). The protein operates within cofactor biosynthesis; adenosylcobalamin biosynthesis; precorrin-2 from uroporphyrinogen III: step 1/1. It functions in the pathway cofactor biosynthesis; adenosylcobalamin biosynthesis; sirohydrochlorin from precorrin-2: step 1/1. Its pathway is porphyrin-containing compound metabolism; siroheme biosynthesis; precorrin-2 from uroporphyrinogen III: step 1/1. It participates in porphyrin-containing compound metabolism; siroheme biosynthesis; siroheme from sirohydrochlorin: step 1/1. The protein operates within porphyrin-containing compound metabolism; siroheme biosynthesis; sirohydrochlorin from precorrin-2: step 1/1. Multifunctional enzyme that catalyzes the SAM-dependent methylations of uroporphyrinogen III at position C-2 and C-7 to form precorrin-2 via precorrin-1. Then it catalyzes the NAD-dependent ring dehydrogenation of precorrin-2 to yield sirohydrochlorin. Finally, it catalyzes the ferrochelation of sirohydrochlorin to yield siroheme. The protein is Siroheme synthase of Baumannia cicadellinicola subsp. Homalodisca coagulata.